The sequence spans 160 residues: Large ribosomal subunit protein bL19 (160 aa).

Belongs to the bacterial ribosomal protein bL19 family.

This protein is located at the 30S-50S ribosomal subunit interface and may play a role in the structure and function of the aminoacyl-tRNA binding site. The chain is Large ribosomal subunit protein bL19 from Prochlorococcus marinus subsp. pastoris (strain CCMP1986 / NIES-2087 / MED4).